Reading from the N-terminus, the 502-residue chain is Glycerol kinase (502 aa).

Threonine 15 serves as a coordination point for ADP. 3 residues coordinate ATP: threonine 15, threonine 16, and serine 17. Sn-glycerol 3-phosphate is bound at residue threonine 15. Arginine 19 contributes to the ADP binding site. Sn-glycerol 3-phosphate-binding residues include arginine 85, glutamate 86, and tyrosine 137. Glycerol is bound by residues arginine 85, glutamate 86, and tyrosine 137. Position 233 is a phosphohistidine; by HPr (histidine 233). Residue aspartate 247 coordinates sn-glycerol 3-phosphate. The glycerol site is built by aspartate 247 and glutamine 248. The ADP site is built by threonine 269 and glycine 312. ATP-binding residues include threonine 269, glycine 312, glutamine 316, and glycine 413. Residues glycine 413 and asparagine 417 each contribute to the ADP site.

The protein belongs to the FGGY kinase family. Homotetramer and homodimer (in equilibrium). The phosphoenolpyruvate-dependent sugar phosphotransferase system (PTS), including enzyme I, and histidine-containing protein (HPr) are required for the phosphorylation, which leads to the activation of the enzyme.

The enzyme catalyses glycerol + ATP = sn-glycerol 3-phosphate + ADP + H(+). Its pathway is polyol metabolism; glycerol degradation via glycerol kinase pathway; sn-glycerol 3-phosphate from glycerol: step 1/1. Activated by phosphorylation and inhibited by fructose 1,6-bisphosphate (FBP). Its function is as follows. Key enzyme in the regulation of glycerol uptake and metabolism. Catalyzes the phosphorylation of glycerol to yield sn-glycerol 3-phosphate. The polypeptide is Glycerol kinase (Streptococcus agalactiae serotype Ia (strain ATCC 27591 / A909 / CDC SS700)).